Here is a 362-residue protein sequence, read N- to C-terminus: Phosphoserine aminotransferase (362 aa).

R43 provides a ligand contact to L-glutamate. Pyridoxal 5'-phosphate is bound by residues 77–78 (AT), W103, T153, D173, and Q196. K197 bears the N6-(pyridoxal phosphate)lysine mark. 238-239 (NT) is a pyridoxal 5'-phosphate binding site.

Belongs to the class-V pyridoxal-phosphate-dependent aminotransferase family. SerC subfamily. As to quaternary structure, homodimer. It depends on pyridoxal 5'-phosphate as a cofactor.

It localises to the cytoplasm. The catalysed reaction is O-phospho-L-serine + 2-oxoglutarate = 3-phosphooxypyruvate + L-glutamate. It carries out the reaction 4-(phosphooxy)-L-threonine + 2-oxoglutarate = (R)-3-hydroxy-2-oxo-4-phosphooxybutanoate + L-glutamate. The protein operates within amino-acid biosynthesis; L-serine biosynthesis; L-serine from 3-phospho-D-glycerate: step 2/3. It participates in cofactor biosynthesis; pyridoxine 5'-phosphate biosynthesis; pyridoxine 5'-phosphate from D-erythrose 4-phosphate: step 3/5. Functionally, catalyzes the reversible conversion of 3-phosphohydroxypyruvate to phosphoserine and of 3-hydroxy-2-oxo-4-phosphonooxybutanoate to phosphohydroxythreonine. This Xylella fastidiosa (strain 9a5c) protein is Phosphoserine aminotransferase.